We begin with the raw amino-acid sequence, 393 residues long: MSSALANIYARLPVSFTHGRGVWLWDTGERRYLDALAGIGVSCLGHGHPGLVAAISEQAARLIHTSNIYEVPQQAALARRLAELSGMSEVLFNNSGSEANEAAIKLARYYGYKQGNTHAHIITMDSSWHGRTLATLAATGSDKARQGFGPMPSGFIQVPYNDLPAIRAAGEAEPRVTAVLLEVLQGEGGIRPSDMAFLQGVRQLCTERGWLLMIDEVQSGIGRTGKWFAHQWADIRPDVMTLAKGLAGGVPIGAMLAAGPAAGVFAPGSHGTTFGGGPLACAAGLAVIDAIEQEGLLGNAHEVGAHLHAALASELAGAPGVIEVRGRGLMLGIELDRPCGILATRAMEAGLLINVTRERVVRLLPPLILSGEEADQIVRILVPLIKQFLAQQQ.

Residue arginine 131 participates in N(2)-acetyl-L-ornithine binding. A pyridoxal 5'-phosphate-binding site is contributed by 215–218 (DEVQ). Lysine 244 is modified (N6-(pyridoxal phosphate)lysine). Residue threonine 272 coordinates N(2)-acetyl-L-ornithine. Threonine 273 contacts pyridoxal 5'-phosphate.

Belongs to the class-III pyridoxal-phosphate-dependent aminotransferase family. ArgD subfamily. Homodimer. The cofactor is pyridoxal 5'-phosphate.

Its subcellular location is the cytoplasm. It carries out the reaction N(2)-acetyl-L-ornithine + 2-oxoglutarate = N-acetyl-L-glutamate 5-semialdehyde + L-glutamate. It functions in the pathway amino-acid biosynthesis; L-arginine biosynthesis; N(2)-acetyl-L-ornithine from L-glutamate: step 4/4. In Bordetella pertussis (strain Tohama I / ATCC BAA-589 / NCTC 13251), this protein is Acetylornithine aminotransferase 1.